The primary structure comprises 484 residues: tRNA sulfurtransferase (484 aa).

The region spanning 63 to 167 (QAFGERLACI…RDNLYMVTKR (105 aa)) is the THUMP domain. ATP contacts are provided by residues 185 to 186 (LI), Lys-267, Gly-289, and Gln-298. Cys-346 and Cys-458 are oxidised to a cystine. The region spanning 406-484 (IDTNQVVIDI…GYTNVKVYRP (79 aa)) is the Rhodanese domain. Cys-458 functions as the Cysteine persulfide intermediate in the catalytic mechanism.

The protein belongs to the ThiI family.

It is found in the cytoplasm. The enzyme catalyses [ThiI sulfur-carrier protein]-S-sulfanyl-L-cysteine + a uridine in tRNA + 2 reduced [2Fe-2S]-[ferredoxin] + ATP + H(+) = [ThiI sulfur-carrier protein]-L-cysteine + a 4-thiouridine in tRNA + 2 oxidized [2Fe-2S]-[ferredoxin] + AMP + diphosphate. The catalysed reaction is [ThiS sulfur-carrier protein]-C-terminal Gly-Gly-AMP + S-sulfanyl-L-cysteinyl-[cysteine desulfurase] + AH2 = [ThiS sulfur-carrier protein]-C-terminal-Gly-aminoethanethioate + L-cysteinyl-[cysteine desulfurase] + A + AMP + 2 H(+). It participates in cofactor biosynthesis; thiamine diphosphate biosynthesis. Its function is as follows. Catalyzes the ATP-dependent transfer of a sulfur to tRNA to produce 4-thiouridine in position 8 of tRNAs, which functions as a near-UV photosensor. Also catalyzes the transfer of sulfur to the sulfur carrier protein ThiS, forming ThiS-thiocarboxylate. This is a step in the synthesis of thiazole, in the thiamine biosynthesis pathway. The sulfur is donated as persulfide by IscS. The sequence is that of tRNA sulfurtransferase from Shewanella baltica (strain OS155 / ATCC BAA-1091).